The primary structure comprises 147 residues: Ribonuclease 4 (147 aa).

The signal sequence occupies residues 1–28 (MALQRTHSLLLLLLLTLLGLGLVQPSYG). Pyrrolidone carboxylic acid is present on Q29. Residues R35, H40, K68, N71, and T72 each coordinate dUMP. H40 acts as the Proton acceptor in catalysis. 4 cysteine pairs are disulfide-bonded: C53–C109, C67–C120, C85–C135, and C92–C99. The active-site Proton donor is H144. F145 provides a ligand contact to dUMP.

It belongs to the pancreatic ribonuclease family. As to expression, expressed in the cortical and medullary tubules of the kidney, and in the transitional epithelium of the urinary bladder (at protein level).

Its subcellular location is the secreted. Cleaves preferentially after uridine bases. Has antimicrobial activity against uropathogenic E.coli (UPEC). Probably contributes to urinary tract sterility. In Homo sapiens (Human), this protein is Ribonuclease 4 (RNASE4).